A 156-amino-acid polypeptide reads, in one-letter code: Small ribosomal subunit protein uS7 (156 aa).

The protein belongs to the universal ribosomal protein uS7 family. As to quaternary structure, part of the 30S ribosomal subunit. Contacts proteins S9 and S11.

One of the primary rRNA binding proteins, it binds directly to 16S rRNA where it nucleates assembly of the head domain of the 30S subunit. Is located at the subunit interface close to the decoding center, probably blocks exit of the E-site tRNA. The protein is Small ribosomal subunit protein uS7 of Desulfatibacillum aliphaticivorans.